Here is a 356-residue protein sequence, read N- to C-terminus: DNA polymerase IV (356 aa).

Positions 7 to 187 constitute a UmuC domain; it reads IIHVDMDAFY…LPVNRVPGVG (181 aa). Aspartate 11 and aspartate 105 together coordinate Mg(2+). Residue glutamate 106 is part of the active site.

Belongs to the DNA polymerase type-Y family. In terms of assembly, monomer. Mg(2+) serves as cofactor.

Its subcellular location is the cytoplasm. It carries out the reaction DNA(n) + a 2'-deoxyribonucleoside 5'-triphosphate = DNA(n+1) + diphosphate. Poorly processive, error-prone DNA polymerase involved in untargeted mutagenesis. Copies undamaged DNA at stalled replication forks, which arise in vivo from mismatched or misaligned primer ends. These misaligned primers can be extended by PolIV. Exhibits no 3'-5' exonuclease (proofreading) activity. May be involved in translesional synthesis, in conjunction with the beta clamp from PolIII. The sequence is that of DNA polymerase IV from Stenotrophomonas maltophilia (strain R551-3).